The primary structure comprises 447 residues: Tubulin beta chain (447 aa).

Residues Q11, E69, S138, G142, T143, G144, N204, and N226 each coordinate GTP. E69 contributes to the Mg(2+) binding site. Positions 425 to 447 are disordered; that stretch reads YQEASISEGEEEYDEEAPLEAEE. Positions 432–447 are enriched in acidic residues; that stretch reads EGEEEYDEEAPLEAEE.

Belongs to the tubulin family. Dimer of alpha and beta chains. A typical microtubule is a hollow water-filled tube with an outer diameter of 25 nm and an inner diameter of 15 nM. Alpha-beta heterodimers associate head-to-tail to form protofilaments running lengthwise along the microtubule wall with the beta-tubulin subunit facing the microtubule plus end conferring a structural polarity. Microtubules usually have 13 protofilaments but different protofilament numbers can be found in some organisms and specialized cells. Requires Mg(2+) as cofactor.

The protein resides in the cytoplasm. It localises to the cytoskeleton. In terms of biological role, tubulin is the major constituent of microtubules, a cylinder consisting of laterally associated linear protofilaments composed of alpha- and beta-tubulin heterodimers. Microtubules grow by the addition of GTP-tubulin dimers to the microtubule end, where a stabilizing cap forms. Below the cap, tubulin dimers are in GDP-bound state, owing to GTPase activity of alpha-tubulin. The sequence is that of Tubulin beta chain (tubB) from Phaeosphaeria nodorum (strain SN15 / ATCC MYA-4574 / FGSC 10173) (Glume blotch fungus).